Consider the following 432-residue polypeptide: 3-phosphoshikimate 1-carboxyvinyltransferase (432 aa).

The 3-phosphoshikimate site is built by Lys23, Ser24, and Arg28. Position 23 (Lys23) interacts with phosphoenolpyruvate. Positions 95 and 123 each coordinate phosphoenolpyruvate. 3-phosphoshikimate contacts are provided by Ser167, Gln169, Asp317, and Lys344. A phosphoenolpyruvate-binding site is contributed by Gln169. The Proton acceptor role is filled by Asp317. The phosphoenolpyruvate site is built by Arg348 and Arg390.

The protein belongs to the EPSP synthase family. Monomer.

Its subcellular location is the cytoplasm. It catalyses the reaction 3-phosphoshikimate + phosphoenolpyruvate = 5-O-(1-carboxyvinyl)-3-phosphoshikimate + phosphate. Its pathway is metabolic intermediate biosynthesis; chorismate biosynthesis; chorismate from D-erythrose 4-phosphate and phosphoenolpyruvate: step 6/7. In terms of biological role, catalyzes the transfer of the enolpyruvyl moiety of phosphoenolpyruvate (PEP) to the 5-hydroxyl of shikimate-3-phosphate (S3P) to produce enolpyruvyl shikimate-3-phosphate and inorganic phosphate. This Staphylococcus aureus (strain Newman) protein is 3-phosphoshikimate 1-carboxyvinyltransferase.